Reading from the N-terminus, the 493-residue chain is Aspartate-semialdehyde dehydrogenase (Non-phosphorylating) (493 aa).

Residues 160–161 (WN), 184–187 (KPAH), and 237–238 (GS) each bind NADP(+). The Proton acceptor role is filled by glutamate 259. Residue leucine 260 participates in NADP(+) binding. Residue cysteine 293 is the Nucleophile of the active site. Position 390 (glutamate 390) interacts with NADP(+).

It belongs to the aldehyde dehydrogenase family.

Its subcellular location is the cytoplasm. The catalysed reaction is L-aspartate 4-semialdehyde + NAD(+) + H2O = L-aspartate + NADH + 2 H(+). Its function is as follows. Involved in the degradation of ectoine, which allows H.elongata to utilize ectoine as both a carbon and a nitrogen source for growth. Probably catalyzes the NAD(+)-dependent oxidation of L-aspartate-semialdehyde to L-aspartate. This Halomonas elongata (strain ATCC 33173 / DSM 2581 / NBRC 15536 / NCIMB 2198 / 1H9) protein is Aspartate-semialdehyde dehydrogenase (Non-phosphorylating).